The primary structure comprises 102 residues: Small ribosomal subunit protein uS10 (102 aa).

It belongs to the universal ribosomal protein uS10 family. As to quaternary structure, part of the 30S ribosomal subunit.

Involved in the binding of tRNA to the ribosomes. In Kineococcus radiotolerans (strain ATCC BAA-149 / DSM 14245 / SRS30216), this protein is Small ribosomal subunit protein uS10.